Here is a 158-residue protein sequence, read N- to C-terminus: Snaclec crotocetin-1 (158 aa).

The N-terminal stretch at 1–23 is a signal peptide; sequence MGRFIFVSFGLLVVFLSLSGTGA. 3 cysteine pairs are disulfide-bonded: Cys-27–Cys-38, Cys-55–Cys-152, and Cys-127–Cys-144. The 120-residue stretch at 34 to 153 folds into the C-type lectin domain; the sequence is YDQYCYRVIK…CEEKNLFVCK (120 aa).

This sequence belongs to the snaclec family. In terms of assembly, heterodimer; disulfide-linked. Expressed by the venom gland.

It is found in the secreted. Interferes with one step of hemostasis (modulation of platelet aggregation, or coagulation cascade, for example). This is Snaclec crotocetin-1 from Crotalus durissus terrificus (South American rattlesnake).